Reading from the N-terminus, the 508-residue chain is Chromosomal replication initiator protein DnaA (508 aa).

The interval 1 to 91 (MADDPGSSFT…TDALSRRLGQ (91 aa)) is domain I, interacts with DnaA modulators. Positions 91-167 (QQIQLGVRIA…AIDPAVAAGT (77 aa)) are domain II. The disordered stretch occupies residues 104–152 (DDVEDALIPSAEPFPDTDADLSARRRTDSRASGERGAVTNTQPGWTNYF). Over residues 124 to 136 (LSARRRTDSRASG) the composition is skewed to basic and acidic residues. Residues 141-152 (VTNTQPGWTNYF) are compositionally biased toward polar residues. A domain III, AAA+ region region spans residues 168–384 (SLNRRYTFDT…GALIRVTAFA (217 aa)). ATP contacts are provided by Gly212, Gly214, Lys215, and Thr216. The tract at residues 385–508 (SLNKTPIDKS…TTRIRQRSKR (124 aa)) is domain IV, binds dsDNA.

Belongs to the DnaA family. In terms of assembly, oligomerizes as a right-handed, spiral filament on DNA at oriC.

Its subcellular location is the cytoplasm. Functionally, plays an essential role in the initiation and regulation of chromosomal replication. ATP-DnaA binds to the origin of replication (oriC) to initiate formation of the DNA replication initiation complex once per cell cycle. Binds the DnaA box (a 9 base pair repeat at the origin) and separates the double-stranded (ds)DNA. Forms a right-handed helical filament on oriC DNA; dsDNA binds to the exterior of the filament while single-stranded (ss)DNA is stabiized in the filament's interior. The ATP-DnaA-oriC complex binds and stabilizes one strand of the AT-rich DNA unwinding element (DUE), permitting loading of DNA polymerase. After initiation quickly degrades to an ADP-DnaA complex that is not apt for DNA replication. Binds acidic phospholipids. The sequence is that of Chromosomal replication initiator protein DnaA from Mycobacterium avium.